Reading from the N-terminus, the 120-residue chain is Chaperonin GroEL (120 aa).

An ATP-binding site is contributed by 23 to 27 (DGTTT).

Belongs to the chaperonin (HSP60) family. As to quaternary structure, forms a cylinder of 14 subunits composed of two heptameric rings stacked back-to-back. Interacts with the co-chaperonin GroES.

The protein localises to the cytoplasm. The catalysed reaction is ATP + H2O + a folded polypeptide = ADP + phosphate + an unfolded polypeptide.. In terms of biological role, together with its co-chaperonin GroES, plays an essential role in assisting protein folding. The GroEL-GroES system forms a nano-cage that allows encapsulation of the non-native substrate proteins and provides a physical environment optimized to promote and accelerate protein folding. The sequence is that of Chaperonin GroEL from Mycobacterium shimoidei.